The following is a 150-amino-acid chain: Large ribosomal subunit protein uL13 (150 aa).

The segment at 128 to 150 is disordered; sequence GSDHPHSAQEPKILSLNSESVTK.

This sequence belongs to the universal ribosomal protein uL13 family. As to quaternary structure, part of the 50S ribosomal subunit.

Functionally, this protein is one of the early assembly proteins of the 50S ribosomal subunit, although it is not seen to bind rRNA by itself. It is important during the early stages of 50S assembly. The chain is Large ribosomal subunit protein uL13 from Prochlorococcus marinus (strain NATL1A).